The following is a 146-amino-acid chain: uncharacterized protein (146 aa).

Residues 7-27 (FVLSITIVLVILIIIAFIWYN) form a helical membrane-spanning segment.

It belongs to the asfivirus E146L family.

Its subcellular location is the host membrane. It is found in the virion. This is an uncharacterized protein from Ornithodoros (relapsing fever ticks).